The chain runs to 147 residues: Protein phosphatase 1 regulatory subunit 14A (147 aa).

A compositionally biased stretch (basic residues) spans Met1–Leu11. A disordered region spans residues Met1–Val37. Phosphoserine is present on Ser26. The tract at residues Ala35–Lys120 is inhibitory. Thr38 is subject to Phosphothreonine. The tract at residues Leu118–Pro147 is disordered. Positions Pro127–Pro137 are enriched in polar residues. Ser128, Ser134, and Ser136 each carry phosphoserine. Positions Arg138 to Pro147 are enriched in basic and acidic residues.

Belongs to the PP1 inhibitor family. In terms of processing, phosphorylation of Thr-38 induces a conformation change. Detected in aorta smooth muscle and bladder.

It is found in the cytoplasm. In terms of biological role, inhibitor of PPP1CA. Has over 1000-fold higher inhibitory activity when phosphorylated, creating a molecular switch for regulating the phosphorylation status of PPP1CA substrates and smooth muscle contraction. The polypeptide is Protein phosphatase 1 regulatory subunit 14A (CPI17) (Sus scrofa (Pig)).